The sequence spans 347 residues: Phenylalanine--tRNA ligase alpha subunit (347 aa).

Glu261 is a Mg(2+) binding site.

It belongs to the class-II aminoacyl-tRNA synthetase family. Phe-tRNA synthetase alpha subunit type 1 subfamily. Tetramer of two alpha and two beta subunits. Requires Mg(2+) as cofactor.

It localises to the cytoplasm. The catalysed reaction is tRNA(Phe) + L-phenylalanine + ATP = L-phenylalanyl-tRNA(Phe) + AMP + diphosphate + H(+). This Streptococcus mutans serotype c (strain ATCC 700610 / UA159) protein is Phenylalanine--tRNA ligase alpha subunit.